The chain runs to 313 residues: Probable cytochrome c oxidase subunit 2 (313 aa).

The region spanning R5 to Y51 is the RPE1 insert domain. Helical transmembrane passes span Y39 to I59, L94 to I114, and L131 to P151. Positions 233, 268, 272, and 276 each coordinate Cu cation.

Belongs to the cytochrome c oxidase subunit 2 family. Requires Cu cation as cofactor. The cofactor is heme.

It is found in the cell membrane. The enzyme catalyses 4 Fe(II)-[cytochrome c] + O2 + 8 H(+)(in) = 4 Fe(III)-[cytochrome c] + 2 H2O + 4 H(+)(out). In terms of biological role, subunits I and II form the functional core of the enzyme complex. Electrons originating in cytochrome c are transferred via heme a and Cu(A) to the binuclear center formed by heme a3 and Cu(B). This is Probable cytochrome c oxidase subunit 2 (ctaC) from Rickettsia prowazekii (strain Madrid E).